The primary structure comprises 96 residues: Muconolactone Delta-isomerase (96 aa).

This sequence belongs to the muconolactone Delta-isomerase family. Homodecamer.

It catalyses the reaction (S)-muconolactone = (4,5-dihydro-5-oxofuran-2-yl)-acetate. It participates in aromatic compound metabolism; beta-ketoadipate pathway; 5-oxo-4,5-dihydro-2-furylacetate from catechol: step 3/3. This Pseudomonas putida (Arthrobacter siderocapsulatus) protein is Muconolactone Delta-isomerase (catC).